Here is a 155-residue protein sequence, read N- to C-terminus: Large ribosomal subunit protein eL24A (155 aa).

Ser-7 carries the post-translational modification Phosphoserine. Positions 66 to 155 (EVAKKRSRKT…AFQKVAATSR (90 aa)) are disordered. Residues 89–129 (LIKERRSLKPEVRKANREEKLKANKEKKKAEKAARKAEKAK) show a composition bias toward basic and acidic residues. Residues 131-142 (AGTQSSKFSKQQ) are compositionally biased toward polar residues.

This sequence belongs to the eukaryotic ribosomal protein eL24 family. Component of the large ribosomal subunit (LSU). Mature yeast ribosomes consist of a small (40S) and a large (60S) subunit. The 40S small subunit contains 1 molecule of ribosomal RNA (18S rRNA) and 33 different proteins (encoded by 57 genes). The large 60S subunit contains 3 rRNA molecules (25S, 5.8S and 5S rRNA) and 46 different proteins (encoded by 81 genes).

The protein localises to the cytoplasm. Functionally, component of the ribosome, a large ribonucleoprotein complex responsible for the synthesis of proteins in the cell. The small ribosomal subunit (SSU) binds messenger RNAs (mRNAs) and translates the encoded message by selecting cognate aminoacyl-transfer RNA (tRNA) molecules. The large subunit (LSU) contains the ribosomal catalytic site termed the peptidyl transferase center (PTC), which catalyzes the formation of peptide bonds, thereby polymerizing the amino acids delivered by tRNAs into a polypeptide chain. The nascent polypeptides leave the ribosome through a tunnel in the LSU and interact with protein factors that function in enzymatic processing, targeting, and the membrane insertion of nascent chains at the exit of the ribosomal tunnel. The sequence is that of Large ribosomal subunit protein eL24A from Saccharomyces cerevisiae (strain ATCC 204508 / S288c) (Baker's yeast).